A 95-amino-acid polypeptide reads, in one-letter code: High mobility group nucleosome-binding domain-containing protein 3 (95 aa).

Composition is skewed to basic and acidic residues over residues 1–25 (MPKR…EPTR), 39–53 (PEPK…KEPG), and 62–72 (GKKEEKQEAGK). A disordered region spans residues 1-95 (MPKRKSPENA…EEVLSTNASH (95 aa)). Ser6 bears the Phosphoserine mark. Phosphoserine is present on Ser78.

It belongs to the HMGN family. Interacts with the ligand binding domain of the thyroid receptor (TR) (in vitro). Requires the presence of thyroid hormone for its interaction. Interacts with transcriptional regulator SEHBP. Interacts with nucleosomes.

It is found in the nucleus. Functionally, binds to nucleosomes, regulating chromatin structure and consequently, chromatin-dependent processes such as transcription, DNA replication and DNA repair. Affects both insulin and glucagon levels and modulates the expression of pancreatic genes involved in insulin secretion. Regulates the expression of the glucose transporter SLC2A2 by binding specifically to its promoter region and recruiting PDX1 and additional transcription factors. Regulates the expression of SLC6A9, a glycine transporter which regulates the glycine concentration in synaptic junctions in the central nervous system, by binding to its transcription start site. May play a role in ocular development and astrocyte function. The protein is High mobility group nucleosome-binding domain-containing protein 3 (Hmgn3) of Rattus norvegicus (Rat).